The chain runs to 242 residues: Segregation and condensation protein A (242 aa).

The protein belongs to the ScpA family. Component of a cohesin-like complex composed of ScpA, ScpB and the Smc homodimer, in which ScpA and ScpB bind to the head domain of Smc. The presence of the three proteins is required for the association of the complex with DNA.

The protein localises to the cytoplasm. Participates in chromosomal partition during cell division. May act via the formation of a condensin-like complex containing Smc and ScpB that pull DNA away from mid-cell into both cell halves. The sequence is that of Segregation and condensation protein A from Lactococcus lactis subsp. lactis (strain IL1403) (Streptococcus lactis).